Here is a 92-residue protein sequence, read N- to C-terminus: Kinetoplastid membrane protein 11 (92 aa).

The protein belongs to the KMP-11 family. In terms of assembly, monomer.

The protein localises to the cytoplasm. The protein resides in the cytoskeleton. Its function is as follows. May be involved in the regulation of the cytoskeleton through interaction with the subpellicular microtubules. May be involved in parasite mobility and attachment to the surface of the host cell. Behaves as a strong immunogen during infection. The chain is Kinetoplastid membrane protein 11 (KMP-11/1) from Trypanosoma brucei brucei.